We begin with the raw amino-acid sequence, 282 residues long: MSKEVSVEGEQPPVKDYTDPPPEPLLNFGELRLWSFYRALIAEFVATLLFLYVTIATVIGHKEQNAADQCSGVGLLGIAWAFGGMIFILVYCTAGISGGHINPAVTLGLFLARKVSLIRALLYMVAQCLGAIVGVGIVKGIMKHQYNSLGGGANVVAAGYSKGTALGAEIIGTFVLVYTVFSATDPKRSARDSHVPVLAPLPIGFAVFMVHLATIPITGTGINPARSLGAAVIYNQDKPWDDHWILWVGPFVGALAAAAYHQYILRAAAIKALGSFRSNPSN.

Positions 1 to 21 (MSKEVSVEGEQPPVKDYTDPP) are disordered. The Cytoplasmic portion of the chain corresponds to 1–38 (MSKEVSVEGEQPPVKDYTDPPPEPLLNFGELRLWSFYR). The chain crosses the membrane as a helical span at residues 39-59 (ALIAEFVATLLFLYVTIATVI). Over 60–71 (GHKEQNAADQCS) the chain is Extracellular. The helical transmembrane segment at 72–92 (GVGLLGIAWAFGGMIFILVYC) threads the bilayer. Over 93 to 120 (TAGISGGHINPAVTLGLFLARKVSLIRA) the chain is Cytoplasmic. The NPA 1 signature appears at 102-104 (NPA). The helical transmembrane segment at 121–141 (LLYMVAQCLGAIVGVGIVKGI) threads the bilayer. At 142–162 (MKHQYNSLGGGANVVAAGYSK) the chain is on the extracellular side. The helical transmembrane segment at 163–183 (GTALGAEIIGTFVLVYTVFSA) threads the bilayer. Over 184–196 (TDPKRSARDSHVP) the chain is Cytoplasmic. The chain crosses the membrane as a helical span at residues 197 to 217 (VLAPLPIGFAVFMVHLATIPI). Residues 218 to 244 (TGTGINPARSLGAAVIYNQDKPWDDHW) are Extracellular-facing. Positions 223–225 (NPA) match the NPA 2 motif. The chain crosses the membrane as a helical span at residues 245-265 (ILWVGPFVGALAAAAYHQYIL). The Cytoplasmic portion of the chain corresponds to 266 to 282 (RAAAIKALGSFRSNPSN).

This sequence belongs to the MIP/aquaporin (TC 1.A.8) family. PIP (TC 1.A.8.11) subfamily. As to expression, expressed in roots, leaves and fruits.

It is found in the cell membrane. In terms of biological role, water channel required to facilitate the transport of water across cell membrane; mercury-insensitive. Contributes to the tolerance to multiple abiotic stresses including salt (NaCl), cold and water deprivation, by modulating cytosolic K(+)/Na(+) ratio, maintaining osmotic balance, and reducing membrane injury (e.g. oxidative injury). Also regulates the expression of abscisic acid (ABA)- biosynthetic and -responsive genes during dehydration and salt stresses. The chain is Aquaporin PIP2-7 from Musa acuminata (Banana).